The following is a 210-amino-acid chain: Large ribosomal subunit protein uL4 (210 aa).

The segment covering 41 to 52 (QTNARQGTASTK) has biased composition (polar residues). The tract at residues 41 to 71 (QTNARQGTASTKTRAEVRGGGRKPWRQKGTG) is disordered. The span at 60 to 71 (GGRKPWRQKGTG) shows a compositional bias: basic residues.

Belongs to the universal ribosomal protein uL4 family. As to quaternary structure, part of the 50S ribosomal subunit.

One of the primary rRNA binding proteins, this protein initially binds near the 5'-end of the 23S rRNA. It is important during the early stages of 50S assembly. It makes multiple contacts with different domains of the 23S rRNA in the assembled 50S subunit and ribosome. Functionally, forms part of the polypeptide exit tunnel. In Trichormus variabilis (strain ATCC 29413 / PCC 7937) (Anabaena variabilis), this protein is Large ribosomal subunit protein uL4.